The following is a 135-amino-acid chain: L-ectoine synthase (135 aa).

The protein belongs to the ectoine synthase family.

It carries out the reaction (2S)-4-acetamido-2-aminobutanoate = L-ectoine + H2O. The protein operates within amine and polyamine biosynthesis; ectoine biosynthesis; L-ectoine from L-aspartate 4-semialdehyde: step 3/3. Its function is as follows. Catalyzes the circularization of gamma-N-acetyl-alpha,gamma-diaminobutyric acid (ADABA) to ectoine (1,4,5,6-tetrahydro-2-methyl-4-pyrimidine carboxylic acid), which is an excellent osmoprotectant. The chain is L-ectoine synthase from Saccharopolyspora erythraea (strain ATCC 11635 / DSM 40517 / JCM 4748 / NBRC 13426 / NCIMB 8594 / NRRL 2338).